A 188-amino-acid chain; its full sequence is MVKTVYITGYKSFELNIYKDDAPEVYYLKQFIAHKLKHLLDEGLEWVLIQGQMGIELWSAEVVIELKKDFPDIKLGIITPFIGHTQRWNDKNQAKYTNIIQQADFTESIHHTEYMGAYQFKQADQFMLDHTDYTILIYDDEQEASPKYFKAMLVEFMEKTNYTCDIVTFDELTDFINDLQWSQDQSFE.

The protein belongs to the UPF0398 family.

The polypeptide is UPF0398 protein SE_1135 (Staphylococcus epidermidis (strain ATCC 12228 / FDA PCI 1200)).